The following is a 234-amino-acid chain: Cytochrome b (234 aa).

Helical transmembrane passes span 33–53 (FGSL…FLAM), 77–98 (WLIR…YMHV), 113–133 (WNIG…GYVL), and 178–198 (FFAF…IHLL). Heme b contacts are provided by His83 and His97. Heme b-binding residues include His182 and His196. His201 contributes to the a ubiquinone binding site. Residues 226–234 (IKDVLGFLM) traverse the membrane as a helical segment.

It belongs to the cytochrome b family. In terms of assembly, the cytochrome bc1 complex contains 11 subunits: 3 respiratory subunits (MT-CYB, CYC1 and UQCRFS1), 2 core proteins (UQCRC1 and UQCRC2) and 6 low-molecular weight proteins (UQCRH/QCR6, UQCRB/QCR7, UQCRQ/QCR8, UQCR10/QCR9, UQCR11/QCR10 and a cleavage product of UQCRFS1). This cytochrome bc1 complex then forms a dimer. It depends on heme b as a cofactor.

The protein resides in the mitochondrion inner membrane. Functionally, component of the ubiquinol-cytochrome c reductase complex (complex III or cytochrome b-c1 complex) that is part of the mitochondrial respiratory chain. The b-c1 complex mediates electron transfer from ubiquinol to cytochrome c. Contributes to the generation of a proton gradient across the mitochondrial membrane that is then used for ATP synthesis. The protein is Cytochrome b (MT-CYB) of Lepus alleni (Antelope jackrabbit).